The sequence spans 335 residues: Protein-arginine kinase (335 aa).

Residues isoleucine 21–isoleucine 244 enclose the Phosphagen kinase C-terminal domain. ATP is bound by residues serine 24–arginine 28, histidine 82, arginine 115, arginine 166–methionine 170, and arginine 197–glutamate 202.

The protein belongs to the ATP:guanido phosphotransferase family.

The catalysed reaction is L-arginyl-[protein] + ATP = N(omega)-phospho-L-arginyl-[protein] + ADP + H(+). Catalyzes the specific phosphorylation of arginine residues in proteins. The polypeptide is Protein-arginine kinase (Staphylococcus aureus (strain USA300)).